The primary structure comprises 343 residues: MNHSVALNFADGKTFFIAVQEDELLLDAAVRQGINLPLDCREGVCGTCQGTCETGIYEQEYVDEDALSERDLAKRKMLACQTRVKSNAAFYFDHHSSICNAGETLKIATVVTGVELVSETTAILHLDASQHVKQLDFLPGQYARLQIPDTDDWRSYSFANRPNASNQLQFLIRLLPNGVMSNYLRERCQVGQTLIMEAPLGSFYLREVERPLVFIAGGTGLSAFLGMLDNIAEQPNQPSVHLYYGVNTEADLCEQKRLTTYAERIKNFSYHPIISKASEQWQGKSGFIHEHLDKNQLSEQSFDMYLCGPPPMIEAVKTWLDEQAIADCHIYSEKFLQSNTAKT.

The 94-residue stretch at 3–96 folds into the 2Fe-2S ferredoxin-type domain; that stretch reads HSVALNFADG…NAAFYFDHHS (94 aa). [2Fe-2S] cluster contacts are provided by Cys-40, Cys-45, Cys-48, and Cys-80. A ferredoxin-reductase region spans residues 98–338; the sequence is ICNAGETLKI…HIYSEKFLQS (241 aa). The FAD-binding FR-type domain occupies 103–206; that stretch reads ETLKIATVVT…EAPLGSFYLR (104 aa).

The protein belongs to the bacterial ring-hydroxylating dioxygenase ferredoxin reductase family. In terms of assembly, monomer. It is part of the anthranilate dioxygenase two component enzyme system. The other component is an oxygenase component consisting of 3 large (AntA) and 3 small (AntB) subunits. It depends on FAD as a cofactor. [2Fe-2S] cluster serves as cofactor.

It carries out the reaction 2 reduced [2Fe-2S]-[ferredoxin] + NAD(+) + H(+) = 2 oxidized [2Fe-2S]-[ferredoxin] + NADH. It participates in aromatic compound metabolism; anthranilate degradation via hydroxylation; catechol from anthranilate: step 1/1. Functionally, electron transfer component of anthranilate 1,2-dioxygenase system. This Acinetobacter baylyi (strain ATCC 33305 / BD413 / ADP1) protein is Anthranilate 1,2-dioxygenase electron transfer component.